The primary structure comprises 80 residues: Putative DNA-directed RNA polymerase subunit omega (80 aa).

It belongs to the RNA polymerase subunit omega family.

The protein localises to the plastid. It is found in the chloroplast. The catalysed reaction is RNA(n) + a ribonucleoside 5'-triphosphate = RNA(n+1) + diphosphate. Functionally, may be involved in RNA polymerase activity. In Gracilaria tenuistipitata var. liui (Red alga), this protein is Putative DNA-directed RNA polymerase subunit omega.